The chain runs to 288 residues: Mycothiol S-conjugate amidase (288 aa).

The Zn(2+) site is built by histidine 12, aspartate 15, and histidine 142.

It belongs to the MshB deacetylase family. Mca subfamily. Monomer. It depends on Zn(2+) as a cofactor.

The enzyme catalyses mycothiol S-conjugate + H2O = an N-acetyl-L-cysteine-S-conjugate + 1D-myo-inositol 2-amino-2-deoxy-alpha-D-glucopyranoside. Partially inhibited by MSH when MSmB is used as substrate. Competitively inhibited by the GlcNAc-cyclohexyl derivative 5-(4-chlorophenyl)-N-((2R,3R,4R,5S,6R)-2-(cyclohexylthio)-tetrahydro-4,5-dihydroxy-6-(hydroxymethyl)-2H-pyran-3-yl)furan-2-carboxamide, which also inhibits MshB. Its function is as follows. A mycothiol (MSH, N-acetyl-cysteinyl-glucosaminyl-inositol) S-conjugate amidase, it recycles conjugated MSH to the N-acetyl cysteine conjugate and the MSH precursor. Involved in MSH-dependent detoxification of a number of alkylating agents and antibiotics. Activity is specific for the mycothiol moiety. Has a low but measurable deacetylation activity on GlcNAc-Ins (N-acetyl-glucosaminyl-inositol), and thus can also directly contribute to the production of MSH. This chain is Mycothiol S-conjugate amidase, found in Mycobacterium tuberculosis (strain ATCC 25618 / H37Rv).